Reading from the N-terminus, the 443-residue chain is Transmembrane protein 184C (443 aa).

The next 7 membrane-spanning stretches (helical) occupy residues Leu15 to Leu35, Ala46 to Leu66, Ile84 to Ile104, Pro182 to Phe202, Tyr210 to Tyr230, Val252 to Ile272, and Val284 to His304. Over residues Thr369–Asp378 the composition is skewed to polar residues. The tract at residues Thr369 to Pro422 is disordered. The span at Gln399–Thr411 shows a compositional bias: low complexity.

The protein belongs to the TMEM184 family.

It localises to the membrane. Functionally, may play a role in cell growth. This chain is Transmembrane protein 184C (tmem184c), found in Xenopus tropicalis (Western clawed frog).